A 247-amino-acid polypeptide reads, in one-letter code: 1-(5-phosphoribosyl)-5-[(5-phosphoribosylamino)methylideneamino] imidazole-4-carboxamide isomerase (247 aa).

Residue aspartate 8 is the Proton acceptor of the active site. The Proton donor role is filled by aspartate 131.

This sequence belongs to the HisA/HisF family.

Its subcellular location is the cytoplasm. The enzyme catalyses 1-(5-phospho-beta-D-ribosyl)-5-[(5-phospho-beta-D-ribosylamino)methylideneamino]imidazole-4-carboxamide = 5-[(5-phospho-1-deoxy-D-ribulos-1-ylimino)methylamino]-1-(5-phospho-beta-D-ribosyl)imidazole-4-carboxamide. Its pathway is amino-acid biosynthesis; L-histidine biosynthesis; L-histidine from 5-phospho-alpha-D-ribose 1-diphosphate: step 4/9. The sequence is that of 1-(5-phosphoribosyl)-5-[(5-phosphoribosylamino)methylideneamino] imidazole-4-carboxamide isomerase from Methylobacillus flagellatus (strain ATCC 51484 / DSM 6875 / VKM B-1610 / KT).